Consider the following 725-residue polypeptide: MADVYELFLTCPKGLESLLLEEAQGLGLSEARAQVSAVRGQGSLEVAYRLCLWSRLANRVLLVLARFPVENAESMYLAVHAVNWEDHLDAGGTLAVEFSGKGSGIDNTHFGALKVKDAIVDNLRERSGRRPSVDKVNPDVRVHLHLDRGQATLSLDLSGHSLHQRGYRLQQGAAPLKENLAAAVLIRAGWPKIAAEGGALADPMCGVGTFLVEAALMAADIAPNLRRERWGFSNWLGHVPALWRKLHEEAQQRAAAGLARAPLWIRGYEADPRLIQPARNNIERAGVADWVKIYQGELATFEPRPDKGQAGLVICNPPYGERLGDEASLLYLYQNLGERLRQSCIGWSAGVFTGAPELGKRMGIRSHKQYAFWNGALACKLLMIQVEPRQFVTGERGERNDDGQARAPSEPARLSEGGQMFANRLQKNLRQLGKWARRDKVECYRLYDADMPEYALAVDIYGDWVHVQEYAAPKSVDPAKAQARLFDALAAIPQALGVAQERVVVKRRERQAGKKQYERQSSEGKFLEVGEGGVRLLVNLTDYLDTGLFLDHRPMRLRIQKEAAGKRFLNLFCYTATATVHAARGGARSTTSVDLSKTYLDWARRNLSLNGFSDRQRLVHSDVMEWLREDDGQYELIFIDPPTFSNSKRMEGVFDVQRDQVELLDLAMARLAPGGVLYFSNNFRKFELDESVQARYAVEEITGETLDPDFARNPKIHRAWRITVR.

Residues 46 to 157 (VAYRLCLWSR…RGQATLSLDL (112 aa)) enclose the THUMP domain. Positions 393-412 (TGERGERNDDGQARAPSEPA) are disordered. Positions 395–404 (ERGERNDDGQ) are enriched in basic and acidic residues.

The protein belongs to the methyltransferase superfamily. RlmKL family.

The protein localises to the cytoplasm. The enzyme catalyses guanosine(2445) in 23S rRNA + S-adenosyl-L-methionine = N(2)-methylguanosine(2445) in 23S rRNA + S-adenosyl-L-homocysteine + H(+). It catalyses the reaction guanosine(2069) in 23S rRNA + S-adenosyl-L-methionine = N(2)-methylguanosine(2069) in 23S rRNA + S-adenosyl-L-homocysteine + H(+). Its function is as follows. Specifically methylates the guanine in position 2445 (m2G2445) and the guanine in position 2069 (m7G2069) of 23S rRNA. The protein is Ribosomal RNA large subunit methyltransferase K/L of Pseudomonas paraeruginosa (strain DSM 24068 / PA7) (Pseudomonas aeruginosa (strain PA7)).